The chain runs to 426 residues: D-tagatose-1,6-bisphosphate aldolase subunit KbaZ (426 aa).

This sequence belongs to the GatZ/KbaZ family. KbaZ subfamily. Forms a complex with KbaY.

The protein operates within carbohydrate metabolism; D-tagatose 6-phosphate degradation; D-glyceraldehyde 3-phosphate and glycerone phosphate from D-tagatose 6-phosphate: step 2/2. Its function is as follows. Component of the tagatose-1,6-bisphosphate aldolase KbaYZ that is required for full activity and stability of the Y subunit. Could have a chaperone-like function for the proper and stable folding of KbaY. When expressed alone, KbaZ does not show any aldolase activity. This chain is D-tagatose-1,6-bisphosphate aldolase subunit KbaZ, found in Shigella flexneri.